The chain runs to 211 residues: Ras-related protein RABB1b (211 aa).

Gly-13 to Ser-20 contacts GTP. The Effector region signature appears at His-35–Phe-43. Residues Asp-61 to Gln-65, Asn-119 to Asp-122, and Ser-149 to Ala-150 each bind GTP. Residues Cys-209 and Cys-210 are each lipidated (S-geranylgeranyl cysteine).

Belongs to the small GTPase superfamily. Rab family.

It is found in the cell membrane. Intracellular vesicle trafficking and protein transport. This Arabidopsis thaliana (Mouse-ear cress) protein is Ras-related protein RABB1b (RABB1B).